We begin with the raw amino-acid sequence, 398 residues long: Dual-specificity RNA methyltransferase RlmN (398 aa).

The Proton acceptor role is filled by Glu119. A Radical SAM core domain is found at 125–364 (DGDRATLCVS…TIVRKTRGDD (240 aa)). Residues Cys132 and Cys369 are joined by a disulfide bond. Residues Cys139, Cys143, and Cys146 each coordinate [4Fe-4S] cluster. S-adenosyl-L-methionine contacts are provided by residues 193 to 194 (GE), Ser225, 247 to 249 (SLH), and Asn326. The active-site S-methylcysteine intermediate is Cys369.

This sequence belongs to the radical SAM superfamily. RlmN family. [4Fe-4S] cluster serves as cofactor.

The protein resides in the cytoplasm. It catalyses the reaction adenosine(2503) in 23S rRNA + 2 reduced [2Fe-2S]-[ferredoxin] + 2 S-adenosyl-L-methionine = 2-methyladenosine(2503) in 23S rRNA + 5'-deoxyadenosine + L-methionine + 2 oxidized [2Fe-2S]-[ferredoxin] + S-adenosyl-L-homocysteine. The catalysed reaction is adenosine(37) in tRNA + 2 reduced [2Fe-2S]-[ferredoxin] + 2 S-adenosyl-L-methionine = 2-methyladenosine(37) in tRNA + 5'-deoxyadenosine + L-methionine + 2 oxidized [2Fe-2S]-[ferredoxin] + S-adenosyl-L-homocysteine. Specifically methylates position 2 of adenine 2503 in 23S rRNA and position 2 of adenine 37 in tRNAs. m2A2503 modification seems to play a crucial role in the proofreading step occurring at the peptidyl transferase center and thus would serve to optimize ribosomal fidelity. In Serratia proteamaculans (strain 568), this protein is Dual-specificity RNA methyltransferase RlmN.